The following is an 814-amino-acid chain: Lon protease (814 aa).

The disordered stretch occupies residues 1 to 20; sequence MANEAHNIEHTDPEFRDDSA. One can recognise a Lon N-terminal domain in the interval 25 to 219; that stretch reads LPLLPVRDTV…KINQHLAKEL (195 aa). 372 to 379 is a binding site for ATP; sequence GPPGVGKT. The Lon proteolytic domain occupies 610-792; the sequence is TKRAGVVVGL…DEVLEIALPS (183 aa). Residues Ser697 and Lys740 contribute to the active site.

This sequence belongs to the peptidase S16 family. Homohexamer. Organized in a ring with a central cavity.

The protein resides in the cytoplasm. It carries out the reaction Hydrolysis of proteins in presence of ATP.. Functionally, ATP-dependent serine protease that mediates the selective degradation of mutant and abnormal proteins as well as certain short-lived regulatory proteins. Required for cellular homeostasis and for survival from DNA damage and developmental changes induced by stress. Degrades polypeptides processively to yield small peptide fragments that are 5 to 10 amino acids long. Binds to DNA in a double-stranded, site-specific manner. This is Lon protease from Koribacter versatilis (strain Ellin345).